The sequence spans 173 residues: ATP-dependent protease subunit HslV (173 aa).

Threonine 2 is an active-site residue. Na(+) is bound by residues glycine 158, aspartate 161, and serine 164.

It belongs to the peptidase T1B family. HslV subfamily. As to quaternary structure, a double ring-shaped homohexamer of HslV is capped on each side by a ring-shaped HslU homohexamer. The assembly of the HslU/HslV complex is dependent on binding of ATP.

It localises to the cytoplasm. The enzyme catalyses ATP-dependent cleavage of peptide bonds with broad specificity.. Its activity is regulated as follows. Allosterically activated by HslU binding. Protease subunit of a proteasome-like degradation complex believed to be a general protein degrading machinery. This chain is ATP-dependent protease subunit HslV, found in Mannheimia haemolytica (Pasteurella haemolytica).